The sequence spans 271 residues: Putative hydro-lyase OCAR_7359/OCA5_c07590 (271 aa).

Belongs to the D-glutamate cyclase family.

The protein is Putative hydro-lyase OCAR_7359/OCA5_c07590 of Afipia carboxidovorans (strain ATCC 49405 / DSM 1227 / KCTC 32145 / OM5) (Oligotropha carboxidovorans).